The chain runs to 691 residues: WD repeat-containing protein 48 homolog (691 aa).

WD repeat units lie at residues Leu27–Tyr82, Arg88–Ser130, Leu133–Phe168, Gly180–Lys219, Gly222–Thr261, Ala264–Val303, Lys306–Asn347, and Ser399–Glu438.

It belongs to the WD repeat WDR48 family. Interacts with usp-46; the interaction increases the catalytic activity of usp-46 in the presence of wdr-20.

Functionally, together with wdr-20, binds to and stimulates the activity of the deubiquitinating enzyme usp-46, leading to deubiquitination and stabilization of the glr-1 glutamate receptor. The polypeptide is WD repeat-containing protein 48 homolog (wdr-48) (Caenorhabditis briggsae).